The following is a 406-amino-acid chain: Arginine biosynthesis bifunctional protein ArgJ (406 aa).

6 residues coordinate substrate: threonine 156, lysine 182, threonine 193, glutamate 279, asparagine 401, and threonine 406. The active-site Nucleophile is the threonine 193.

Belongs to the ArgJ family. As to quaternary structure, heterotetramer of two alpha and two beta chains.

The protein resides in the cytoplasm. The catalysed reaction is N(2)-acetyl-L-ornithine + L-glutamate = N-acetyl-L-glutamate + L-ornithine. It catalyses the reaction L-glutamate + acetyl-CoA = N-acetyl-L-glutamate + CoA + H(+). It participates in amino-acid biosynthesis; L-arginine biosynthesis; L-ornithine and N-acetyl-L-glutamate from L-glutamate and N(2)-acetyl-L-ornithine (cyclic): step 1/1. It functions in the pathway amino-acid biosynthesis; L-arginine biosynthesis; N(2)-acetyl-L-ornithine from L-glutamate: step 1/4. Its activity is regulated as follows. Feedback inhibition by L-arginine. In terms of biological role, catalyzes two activities which are involved in the cyclic version of arginine biosynthesis: the synthesis of N-acetylglutamate from glutamate and acetyl-CoA as the acetyl donor, and of ornithine by transacetylation between N(2)-acetylornithine and glutamate. In Bacillus amyloliquefaciens (Bacillus velezensis), this protein is Arginine biosynthesis bifunctional protein ArgJ.